Consider the following 149-residue polypeptide: Transcriptional repressor NrdR (149 aa).

The segment at 3–34 is a zinc-finger region; sequence CPFCATDDTKVVDSRLTADGYQIRRRRECPVC. The ATP-cone domain maps to 49-139; that stretch reads PHIVKNNGSR…VYLSFDDVEE (91 aa).

This sequence belongs to the NrdR family. Zn(2+) is required as a cofactor.

Functionally, negatively regulates transcription of bacterial ribonucleotide reductase nrd genes and operons by binding to NrdR-boxes. This Glaesserella parasuis serovar 5 (strain SH0165) (Haemophilus parasuis) protein is Transcriptional repressor NrdR.